Here is a 1373-residue protein sequence, read N- to C-terminus: DNA-directed RNA polymerase subunit beta (1373 aa).

The protein belongs to the RNA polymerase beta chain family. In terms of assembly, the RNAP catalytic core consists of 2 alpha, 1 beta, 1 beta' and 1 omega subunit. When a sigma factor is associated with the core the holoenzyme is formed, which can initiate transcription.

It carries out the reaction RNA(n) + a ribonucleoside 5'-triphosphate = RNA(n+1) + diphosphate. Functionally, DNA-dependent RNA polymerase catalyzes the transcription of DNA into RNA using the four ribonucleoside triphosphates as substrates. The sequence is that of DNA-directed RNA polymerase subunit beta from Rhodopseudomonas palustris (strain BisB18).